Consider the following 147-residue polypeptide: Heavy metal-dependent transcription regulator 2 (147 aa).

Residues 1 to 69 form the HTH merR-type domain; sequence MNIGEASKTS…VEQIKELLAL (69 aa). The segment at residues 3–22 is a DNA-binding region (H-T-H motif); that stretch reads IGEASKTSGVSSKMIRYYEQ.

The protein localises to the cytoplasm. In terms of biological role, transcriptional regulator involved in acid tolerance. Binds copper. In Rhizobium meliloti (strain 1021) (Ensifer meliloti), this protein is Heavy metal-dependent transcription regulator 2 (hmrR2).